The sequence spans 259 residues: UPF0246 protein Pmen_1032 (259 aa).

It belongs to the UPF0246 family.

The sequence is that of UPF0246 protein Pmen_1032 from Ectopseudomonas mendocina (strain ymp) (Pseudomonas mendocina).